The following is an 89-amino-acid chain: MAHKKAGGSSRNGRDSAGRRLGIKKYGGESVIAGNIIARQRGNKWWPGEGVGEGKDHTIYAVADGHVSFKKGFKGRTFISVLPAAEAAE.

A disordered region spans residues 1-20 (MAHKKAGGSSRNGRDSAGRR).

This sequence belongs to the bacterial ribosomal protein bL27 family.

The chain is Large ribosomal subunit protein bL27 from Jannaschia sp. (strain CCS1).